The primary structure comprises 101 residues: Urease subunit beta (101 aa).

Belongs to the urease beta subunit family. Heterotrimer of UreA (gamma), UreB (beta) and UreC (alpha) subunits. Three heterotrimers associate to form the active enzyme.

The protein resides in the cytoplasm. The catalysed reaction is urea + 2 H2O + H(+) = hydrogencarbonate + 2 NH4(+). The protein operates within nitrogen metabolism; urea degradation; CO(2) and NH(3) from urea (urease route): step 1/1. The sequence is that of Urease subunit beta from Rhodopseudomonas palustris (strain HaA2).